Here is a 741-residue protein sequence, read N- to C-terminus: Phosphoribosylformylglycinamidine synthase subunit PurL (741 aa).

The active site involves H53. 2 residues coordinate ATP: Y56 and K95. Mg(2+) is bound at residue E97. Substrate-binding positions include 98 to 101 and R120; that span reads SHNH. H99 (proton acceptor) is an active-site residue. Residue D121 participates in Mg(2+) binding. Substrate is bound at residue Q244. D274 contacts Mg(2+). 318-320 contributes to the substrate binding site; that stretch reads ESQ. ATP contacts are provided by D501 and G538. N539 is a binding site for Mg(2+). Residue S541 participates in substrate binding.

This sequence belongs to the FGAMS family. Monomer. Part of the FGAM synthase complex composed of 1 PurL, 1 PurQ and 2 PurS subunits.

Its subcellular location is the cytoplasm. It carries out the reaction N(2)-formyl-N(1)-(5-phospho-beta-D-ribosyl)glycinamide + L-glutamine + ATP + H2O = 2-formamido-N(1)-(5-O-phospho-beta-D-ribosyl)acetamidine + L-glutamate + ADP + phosphate + H(+). The protein operates within purine metabolism; IMP biosynthesis via de novo pathway; 5-amino-1-(5-phospho-D-ribosyl)imidazole from N(2)-formyl-N(1)-(5-phospho-D-ribosyl)glycinamide: step 1/2. Its function is as follows. Part of the phosphoribosylformylglycinamidine synthase complex involved in the purines biosynthetic pathway. Catalyzes the ATP-dependent conversion of formylglycinamide ribonucleotide (FGAR) and glutamine to yield formylglycinamidine ribonucleotide (FGAM) and glutamate. The FGAM synthase complex is composed of three subunits. PurQ produces an ammonia molecule by converting glutamine to glutamate. PurL transfers the ammonia molecule to FGAR to form FGAM in an ATP-dependent manner. PurS interacts with PurQ and PurL and is thought to assist in the transfer of the ammonia molecule from PurQ to PurL. In Ligilactobacillus salivarius (strain UCC118) (Lactobacillus salivarius), this protein is Phosphoribosylformylglycinamidine synthase subunit PurL.